The primary structure comprises 157 residues: 2-C-methyl-D-erythritol 2,4-cyclodiphosphate synthase (157 aa).

The a divalent metal cation site is built by Asp-8 and His-10. Residues 8–10 (DVH) and 34–35 (HS) each bind 4-CDP-2-C-methyl-D-erythritol 2-phosphate. His-42 serves as a coordination point for a divalent metal cation. 4-CDP-2-C-methyl-D-erythritol 2-phosphate contacts are provided by residues 56-58 (DIG), 61-65 (FPDTD), 100-106 (AQAPKMA), 132-135 (TTTE), Phe-139, and Arg-142.

This sequence belongs to the IspF family. As to quaternary structure, homotrimer. Requires a divalent metal cation as cofactor.

The catalysed reaction is 4-CDP-2-C-methyl-D-erythritol 2-phosphate = 2-C-methyl-D-erythritol 2,4-cyclic diphosphate + CMP. Its pathway is isoprenoid biosynthesis; isopentenyl diphosphate biosynthesis via DXP pathway; isopentenyl diphosphate from 1-deoxy-D-xylulose 5-phosphate: step 4/6. Functionally, involved in the biosynthesis of isopentenyl diphosphate (IPP) and dimethylallyl diphosphate (DMAPP), two major building blocks of isoprenoid compounds. Catalyzes the conversion of 4-diphosphocytidyl-2-C-methyl-D-erythritol 2-phosphate (CDP-ME2P) to 2-C-methyl-D-erythritol 2,4-cyclodiphosphate (ME-CPP) with a corresponding release of cytidine 5-monophosphate (CMP). This chain is 2-C-methyl-D-erythritol 2,4-cyclodiphosphate synthase, found in Pseudomonas putida (strain GB-1).